The primary structure comprises 411 residues: Keratin, type I cytoskeletal 12 (411 aa).

The tract at residues 1–42 (DHDYEFPGIQAFAGLGMGFGGSPGGGSLYLPSGNDGGLLSGS) is head. The interval 43–78 (EKETMQNLNDRLASYLDKVRALEDANAELENKIREW) is coil 1A. Residues 43 to 359 (EKETMQNLND…RLLDGEAQGD (317 aa)) enclose the IF rod domain. The tract at residues 83-101 (GHGHGDCGPQHDYSKYHPL) is linker 1. Positions 102-193 (IEDLRNKIIS…KNHEEELQSC (92 aa)) are coil 1B. Positions 194-216 (RAGGPGEVSVEMDAAPGVDLTRL) are linker 12. A coil 2 region spans residues 217–354 (LNDMRAQYEA…IETYRRLLDG (138 aa)). The interval 355–411 (EAQGDGLDESSAMTGSRSQAQSIDSSKDPSKTRKIKTIVQEVVNGEVVSSQVQEIQN) is tail. Residues 356–387 (AQGDGLDESSAMTGSRSQAQSIDSSKDPSKTR) form a disordered region. A compositionally biased stretch (polar residues) spans 365–378 (SAMTGSRSQAQSID).

The protein belongs to the intermediate filament family. Heterotetramer of two type I and two type II keratins. Keratin-3 associates with keratin-12. As to expression, cornea specific. Associated mainly with all layers of the central corneal epithelium and also found in the suprabasal limbal epithelium.

Functionally, involved in corneal epithelium organization, integrity and corneal keratin expression. The sequence is that of Keratin, type I cytoskeletal 12 (KRT12) from Oryctolagus cuniculus (Rabbit).